The primary structure comprises 305 residues: Porphobilinogen deaminase (305 aa).

Position 240 is an S-(dipyrrolylmethanemethyl)cysteine (Cys240).

Belongs to the HMBS family. Monomer. It depends on dipyrromethane as a cofactor.

The enzyme catalyses 4 porphobilinogen + H2O = hydroxymethylbilane + 4 NH4(+). Its pathway is porphyrin-containing compound metabolism; protoporphyrin-IX biosynthesis; coproporphyrinogen-III from 5-aminolevulinate: step 2/4. Functionally, tetrapolymerization of the monopyrrole PBG into the hydroxymethylbilane pre-uroporphyrinogen in several discrete steps. The polypeptide is Porphobilinogen deaminase (Xylella fastidiosa (strain M23)).